The sequence spans 919 residues: Glutamate receptor ionotropic, kainate 3 (919 aa).

Residues 1 to 31 (MTAPWRRLRSLVWEYWAGLLVCAFWIPDSRG) form the signal peptide. Topologically, residues 32 to 563 (MPHVIRIGGI…VFSFLNPLSP (532 aa)) are extracellular. 7 N-linked (GlcNAc...) asparagine glycosylation sites follow: Asn70, Asn76, Asn278, Asn381, Asn415, Asn426, and Asn433. Cys99 and Cys350 form a disulfide bridge. Residues Pro518, Thr520, and Arg525 each contribute to the L-glutamate site. N-linked (GlcNAc...) asparagine glycans are attached at residues Asn548 and Asn551. The helical transmembrane segment at 564 to 584 (DIWMYVLLAYLGVSCVLFVIA) threads the bilayer. The Cytoplasmic segment spans residues 585-636 (RFSPYEWYDAHPCNPGSEVVENNFTLLNSFWFGMGSLMQQGSELMPKALSTR). The chain crosses the membrane as a helical span at residues 637-657 (IIGGIWWFFTLIIISSYTANL). Residues 658–820 (AAFLTVERME…KEASALGIQK (163 aa)) lie on the Extracellular side of the membrane. 3 residues coordinate L-glutamate: Ala691, Thr692, and Glu739. Asn752 carries N-linked (GlcNAc...) asparagine glycosylation. A helical membrane pass occupies residues 821-841 (IGGIFIVLAAGLVLSVLVAVG). Topologically, residues 842 to 919 (EFVYKLRKTA…CSTSLAPVFP (78 aa)) are cytoplasmic. Phosphoserine is present on Ser869. A Glycyl lysine isopeptide (Lys-Gly) (interchain with G-Cter in SUMO1) cross-link involves residue Lys887.

It belongs to the glutamate-gated ion channel (TC 1.A.10.1) family. GRIK3 subfamily. As to quaternary structure, homotetramer, and heterotetramer with either GRIK4 or GRIK5. Can form functional heteromeric receptors with GRIK2. Interacts with PRKCABP. Interacts with NETO2.

The protein localises to the cell membrane. The protein resides in the postsynaptic cell membrane. The enzyme catalyses Ca(2+)(in) = Ca(2+)(out). Ionotropic glutamate receptor that functions as a cation-permeable ligand-gated ion channel, gated by L-glutamate and the glutamatergic agonist kainic acid. Binding of the excitatory neurotransmitter L-glutamate induces a conformation change, leading to the opening of the cation channel, and thereby converts the chemical signal to an electrical impulse. The receptor then desensitizes rapidly and enters a transient inactive state, characterized by the presence of bound agonist. In association with GRIK2, involved in presynaptic facilitation of glutamate release at hippocampal mossy fiber synapses. This is Glutamate receptor ionotropic, kainate 3 (GRIK3) from Macaca fascicularis (Crab-eating macaque).